Here is a 64-residue protein sequence, read N- to C-terminus: Putative neurotoxin-H (64 aa).

The N-terminal stretch at 1–19 is a signal peptide; it reads MYATVTVTVLLLISSGIFC. 3 disulfides stabilise this stretch: C25/C45, C32/C54, and C36/C56.

In terms of tissue distribution, expressed by the venom gland.

The protein localises to the secreted. In Lychas mucronatus (Chinese swimming scorpion), this protein is Putative neurotoxin-H.